Here is a 500-residue protein sequence, read N- to C-terminus: Prostacyclin synthase (500 aa).

A helical transmembrane segment spans residues 1-20 (MAWAALLGLLAALLLLLLLS). Substrate contacts are provided by residues R106, L112, N287, 358 to 359 (TR), and R382. C441 is a binding site for heme.

Belongs to the cytochrome P450 family. The cofactor is heme. In terms of tissue distribution, widely expressed; particularly abundant in ovary, heart, skeletal muscle, lung and prostate.

The protein resides in the endoplasmic reticulum membrane. The enzyme catalyses prostaglandin H2 = prostaglandin I2. It catalyses the reaction a hydroperoxyeicosatetraenoate = an oxoeicosatetraenoate + H2O. It carries out the reaction (15S)-hydroperoxy-(5Z,8Z,11Z,13E)-eicosatetraenoate = 15-oxo-(5Z,8Z,11Z,13E)-eicosatetraenoate + H2O. The catalysed reaction is (15S)-hydroperoxy-(5Z,8Z,11Z,13E)-eicosatetraenoate + AH2 = (15S)-hydroxy-(5Z,8Z,11Z,13E)-eicosatetraenoate + A + H2O. In terms of biological role, catalyzes the biosynthesis and metabolism of eicosanoids. Catalyzes the isomerization of prostaglandin H2 to prostacyclin (= prostaglandin I2), a potent mediator of vasodilation and inhibitor of platelet aggregation. Additionally, displays dehydratase activity, toward hydroperoxyeicosatetraenoates (HPETEs), especially toward (15S)-hydroperoxy-(5Z,8Z,11Z,13E)-eicosatetraenoate (15(S)-HPETE). This Homo sapiens (Human) protein is Prostacyclin synthase (PTGIS).